The primary structure comprises 598 residues: Proline--tRNA ligase (598 aa).

It belongs to the class-II aminoacyl-tRNA synthetase family. ProS type 1 subfamily. In terms of assembly, homodimer.

It localises to the cytoplasm. It catalyses the reaction tRNA(Pro) + L-proline + ATP = L-prolyl-tRNA(Pro) + AMP + diphosphate. In terms of biological role, catalyzes the attachment of proline to tRNA(Pro) in a two-step reaction: proline is first activated by ATP to form Pro-AMP and then transferred to the acceptor end of tRNA(Pro). As ProRS can inadvertently accommodate and process non-cognate amino acids such as alanine and cysteine, to avoid such errors it has two additional distinct editing activities against alanine. One activity is designated as 'pretransfer' editing and involves the tRNA(Pro)-independent hydrolysis of activated Ala-AMP. The other activity is designated 'posttransfer' editing and involves deacylation of mischarged Ala-tRNA(Pro). The misacylated Cys-tRNA(Pro) is not edited by ProRS. The polypeptide is Proline--tRNA ligase (Rippkaea orientalis (strain PCC 8801 / RF-1) (Cyanothece sp. (strain PCC 8801))).